The chain runs to 341 residues: Methionine import ATP-binding protein MetN (341 aa).

The region spanning 2–241 (INLQDVSKVY…PKEQMTKRFV (240 aa)) is the ABC transporter domain. 38–45 (GYSGAGKS) contacts ATP.

This sequence belongs to the ABC transporter superfamily. Methionine importer (TC 3.A.1.24) family. In terms of assembly, the complex is composed of two ATP-binding proteins (MetN), two transmembrane proteins (MetP) and a solute-binding protein (MetQ).

The protein localises to the cell membrane. It carries out the reaction L-methionine(out) + ATP + H2O = L-methionine(in) + ADP + phosphate + H(+). The catalysed reaction is D-methionine(out) + ATP + H2O = D-methionine(in) + ADP + phosphate + H(+). In terms of biological role, part of the ABC transporter complex MetNPQ involved in methionine import. Responsible for energy coupling to the transport system. It has also been shown to be involved in methionine sulfoxide transport. The protein is Methionine import ATP-binding protein MetN of Bacillus subtilis (strain 168).